The following is a 1894-amino-acid chain: Plexin-A2 (1894 aa).

A signal peptide spans Met1 to Gly34. N-linked (GlcNAc...) asparagine glycosylation is found at Asn15 and Asn76. Positions Met35–Val508 constitute a Sema domain. The Extracellular segment spans residues Met35–Pro1237. 2 disulfides stabilise this stretch: Cys94–Cys103 and Cys129–Cys137. Residues Asn163 and Asn327 are each glycosylated (N-linked (GlcNAc...) asparagine). Cystine bridges form between Cys284–Cys405, Cys300–Cys356, Cys374–Cys393, Cys511–Cys528, Cys517–Cys559, Cys520–Cys537, Cys531–Cys543, and Cys594–Cys613. N-linked (GlcNAc...) asparagine glycosylation is found at Asn598, Asn696, and Asn756. IPT/TIG domains follow at residues Pro858–Phe951, Pro954–Tyr1037, Pro1041–Tyr1139, and Pro1143–Val1228. 2 N-linked (GlcNAc...) asparagine glycosylation sites follow: Asn1180 and Asn1205. The helical transmembrane segment at Ala1238–Ile1258 threads the bilayer. Over Ala1259–Ser1894 the chain is Cytoplasmic. The stretch at Lys1261 to Ser1310 forms a coiled coil. Ser1612 is modified (phosphoserine).

It belongs to the plexin family. Homodimer. Interacts with RND1. Interacts directly with NRP1 and NRP2. The PLXNA2 homodimer interacts with a SEMA6A homodimer, giving rise to a heterotetramer.

The protein localises to the cell membrane. Functionally, coreceptor for SEMA3A and SEMA6A. Necessary for signaling by SEMA6A and class 3 semaphorins and subsequent remodeling of the cytoskeleton. Plays a role in axon guidance, invasive growth and cell migration. Class 3 semaphorins bind to a complex composed of a neuropilin and a plexin. The plexin modulates the affinity of the complex for specific semaphorins, and its cytoplasmic domain is required for the activation of down-stream signaling events in the cytoplasm. This chain is Plexin-A2 (Plxna2), found in Mus musculus (Mouse).